Reading from the N-terminus, the 278-residue chain is MEVRQAINSDYAKTLDTDGLRKAFLVDQVFERDALKLTYSHIDRIIVGGVMPVARAVEVPSSLGKSIGVSYLLERRELGAINIGGDGWVDVDGTRHTVRNEEAIYIGQGTQAIAFGSDDAARPAKFYLNCAPAHTSYPTRTISLAQASPQTLGDPATSNRRTIYKFIVPEVLPTCQLSMGMTKLEPGSLWNTMPCHTHERRMEVYFYFNVADDAAVFHMMGEPNETRHILVHNEQAVISPSWSIHSGVGTRAYTFIWGMVGENQVFGDMDHIAVRDLR.

Residues H196, H198, E203, and H245 each coordinate Zn(2+).

This sequence belongs to the KduI family. Requires Zn(2+) as cofactor.

The catalysed reaction is 5-dehydro-4-deoxy-D-glucuronate = 3-deoxy-D-glycero-2,5-hexodiulosonate. It functions in the pathway glycan metabolism; pectin degradation; 2-dehydro-3-deoxy-D-gluconate from pectin: step 4/5. Its function is as follows. Catalyzes the isomerization of 5-dehydro-4-deoxy-D-glucuronate to 3-deoxy-D-glycero-2,5-hexodiulosonate. In Paraburkholderia phytofirmans (strain DSM 17436 / LMG 22146 / PsJN) (Burkholderia phytofirmans), this protein is 4-deoxy-L-threo-5-hexosulose-uronate ketol-isomerase.